Consider the following 572-residue polypeptide: Phosphoenolpyruvate-protein phosphotransferase (572 aa).

His-190 acts as the Tele-phosphohistidine intermediate in catalysis. The phosphoenolpyruvate site is built by Arg-297 and Arg-333. 2 residues coordinate Mg(2+): Glu-427 and Asp-451. Phosphoenolpyruvate-binding positions include 450 to 451 and Arg-461; that span reads ND. The Proton donor role is filled by Cys-498.

Belongs to the PEP-utilizing enzyme family. In terms of assembly, homodimer. It depends on Mg(2+) as a cofactor.

The protein resides in the cytoplasm. It catalyses the reaction L-histidyl-[protein] + phosphoenolpyruvate = N(pros)-phospho-L-histidyl-[protein] + pyruvate. In terms of biological role, general (non sugar-specific) component of the phosphoenolpyruvate-dependent sugar phosphotransferase system (sugar PTS). This major carbohydrate active-transport system catalyzes the phosphorylation of incoming sugar substrates concomitantly with their translocation across the cell membrane. Enzyme I transfers the phosphoryl group from phosphoenolpyruvate (PEP) to the phosphoryl carrier protein (HPr). The protein is Phosphoenolpyruvate-protein phosphotransferase (ptsI) of Mycoplasma pneumoniae (strain ATCC 29342 / M129 / Subtype 1) (Mycoplasmoides pneumoniae).